We begin with the raw amino-acid sequence, 154 residues long: Ribonuclease H (154 aa).

Residues 1 to 142 enclose the RNase H type-1 domain; that stretch reads MTKHVEIFTD…CDELARTAAE (142 aa). The Mg(2+) site is built by Asp-10, Glu-48, Asp-70, and Asp-134.

It belongs to the RNase H family. As to quaternary structure, monomer. It depends on Mg(2+) as a cofactor.

The protein localises to the cytoplasm. It carries out the reaction Endonucleolytic cleavage to 5'-phosphomonoester.. Functionally, endonuclease that specifically degrades the RNA of RNA-DNA hybrids. This Vibrio campbellii (strain ATCC BAA-1116) protein is Ribonuclease H.